Reading from the N-terminus, the 500-residue chain is Cholesterol 24-hydroxylase (500 aa).

A helical transmembrane segment spans residues 3 to 23; it reads PGLLLLGSAVLLAFGLCCTFV. Position 437 (cysteine 437) interacts with heme.

This sequence belongs to the cytochrome P450 family. Heme is required as a cofactor. In terms of tissue distribution, expressed in high level in the pyramidal cells of the hippocampus, Purkinje cells of the cerebellum, and neuronal cell bodies in layers II/III, V, and VI of the cortex. Expressed in hippocampal and cerebellar interneurons, in retinal ganglion cells, and in a subset of retinal cells localized to the inner nuclear layer (at protein level).

The protein resides in the endoplasmic reticulum membrane. The protein localises to the microsome membrane. It localises to the postsynapse. Its subcellular location is the presynapse. It is found in the cell projection. The protein resides in the dendrite. It catalyses the reaction cholesterol + reduced [NADPH--hemoprotein reductase] + O2 = (24S)-hydroxycholesterol + oxidized [NADPH--hemoprotein reductase] + H2O + H(+). The enzyme catalyses cholestanol + reduced [NADPH--hemoprotein reductase] + O2 = (24S)-hydroxycholestanol + oxidized [NADPH--hemoprotein reductase] + H2O + H(+). The catalysed reaction is 7-dehydrocholesterol + reduced [NADPH--hemoprotein reductase] + O2 = cholesta-5,7-dien-3beta,24S-diol + oxidized [NADPH--hemoprotein reductase] + H2O + H(+). It carries out the reaction 7-dehydrocholesterol + reduced [NADPH--hemoprotein reductase] + O2 = cholesta-5,7-dien-3beta,25-diol + oxidized [NADPH--hemoprotein reductase] + H2O + H(+). It catalyses the reaction desmosterol + reduced [NADPH--hemoprotein reductase] + O2 = (24Z),26-hydroxydesmosterol + oxidized [NADPH--hemoprotein reductase] + H2O + H(+). The enzyme catalyses desmosterol + reduced [NADPH--hemoprotein reductase] + O2 = (24S)-25-epoxycholesterol + oxidized [NADPH--hemoprotein reductase] + H2O + H(+). The catalysed reaction is 4beta-hydroxycholesterol + reduced [NADPH--hemoprotein reductase] + O2 = 4beta,24S-dihydroxycholesterol + oxidized [NADPH--hemoprotein reductase] + H2O + H(+). It carries out the reaction (24S)-hydroxycholesterol + reduced [NADPH--hemoprotein reductase] + O2 = (24S,25R)-24,26-dihydroxycholesterol + oxidized [NADPH--hemoprotein reductase] + H2O + H(+). It catalyses the reaction (24S)-hydroxycholesterol + reduced [NADPH--hemoprotein reductase] + O2 = 24S,25-dihydroxycholesterol + oxidized [NADPH--hemoprotein reductase] + H2O + H(+). The enzyme catalyses 7alpha-hydroxycholesterol + reduced [NADPH--hemoprotein reductase] + O2 = (24S)-7alpha-dihydroxycholesterol + oxidized [NADPH--hemoprotein reductase] + H2O + H(+). The catalysed reaction is progesterone + reduced [NADPH--hemoprotein reductase] + O2 = 17alpha-hydroxyprogesterone + oxidized [NADPH--hemoprotein reductase] + H2O + H(+). It carries out the reaction testosterone + reduced [NADPH--hemoprotein reductase] + O2 = 16beta,17beta-dihydroxyandrost-4-en-3-one + oxidized [NADPH--hemoprotein reductase] + H2O + H(+). It catalyses the reaction testosterone + reduced [NADPH--hemoprotein reductase] + O2 = 2-hydroxytestosterone + oxidized [NADPH--hemoprotein reductase] + H2O + H(+). The enzyme catalyses testosterone + reduced [NADPH--hemoprotein reductase] + O2 = 6beta,17beta-dihydroxyandrost-4-en-3-one + oxidized [NADPH--hemoprotein reductase] + H2O + H(+). It participates in steroid metabolism; cholesterol degradation. It functions in the pathway lipid metabolism; C21-steroid hormone metabolism. Its function is as follows. P450 monooxygenase that plays a major role in cholesterol homeostasis in the brain. Primarily catalyzes the hydroxylation (with S stereochemistry) at C-24 of cholesterol side chain, triggering cholesterol diffusion out of neurons and its further degradation. By promoting constant cholesterol elimination in neurons, may activate the mevalonate pathway and coordinate the synthesis of new cholesterol and nonsterol isoprenoids involved in synaptic activity and learning. Further hydroxylates cholesterol derivatives and hormone steroids on both the ring and side chain of these molecules, converting them into active oxysterols involved in lipid signaling and biosynthesis. Acts as an epoxidase converting cholesta-5,24-dien-3beta-ol/desmosterol into (24S),25-epoxycholesterol, an abundant lipid ligand of nuclear NR1H2 and NR1H3 receptors shown to promote neurogenesis in developing brain. May also catalyze the oxidative metabolism of xenobiotics, such as clotrimazole. This is Cholesterol 24-hydroxylase from Mus musculus (Mouse).